The following is a 227-amino-acid chain: N-acetyltransferase 8B (227 aa).

Topologically, residues 1 to 42 (MAPYHIRKYQESDRKSVVGLLSGGMAEHAPATFRRLLKLPRT) are cytoplasmic. A helical; Signal-anchor for type II membrane protein transmembrane segment spans residues 43-63 (LILLLGGALALLLVSGSWILA). The N-acetyltransferase domain maps to 61–214 (ILALVFSLSL…ARLVDLHTVH (154 aa)). The Lumenal segment spans residues 64–227 (LVFSLSLLPA…HLPSAQAGRL (164 aa)). Lysine 99 bears the N6-acetyllysine mark.

This sequence belongs to the NAT8 family. In terms of processing, acetylation on Lys-99 modulates enzymatic activity.

It is found in the endoplasmic reticulum-Golgi intermediate compartment membrane. It localises to the endoplasmic reticulum membrane. The catalysed reaction is L-lysyl-[protein] + acetyl-CoA = N(6)-acetyl-L-lysyl-[protein] + CoA + H(+). Allosterically regulated by acetylation at residue Lys-99. Functionally, endoplasmic reticulum (ER)-membrane-bound lysine N-acetyltransferase catalyzing the N6-acetylation of lysine residues in the lumen of the ER in various proteins, including PROM1 and BACE1, using acetyl-CoA as acetyl donor. Thereby, may regulate apoptosis through the acetylation and the regulation of the expression of PROM1. Acetylates and stabilizes BACE1 immature protein, leading to increased steady-state levels in neurons. By acting on BACE1 expression, may regulate amyloid beta-peptide formation. N(6)-lysine acetylation in ER maintains protein homeostasis and regulates reticulophagy. In Homo sapiens (Human), this protein is N-acetyltransferase 8B.